Consider the following 337-residue polypeptide: 25S rRNA (adenine(2142)-N(1))-methyltransferase (337 aa).

The S-adenosyl-L-methionine site is built by Gly180 and Asp201.

It belongs to the BMT2 family.

Its subcellular location is the nucleus. The protein resides in the nucleolus. It catalyses the reaction adenosine(2142) in 25S rRNA + S-adenosyl-L-methionine = N(1)-methyladenosine(2142) in 25S rRNA + S-adenosyl-L-homocysteine + H(+). S-adenosyl-L-methionine-dependent methyltransferase that specifically methylates the N(1) position of adenine 2142 in 25S rRNA. N(1)-methyladenine(2142) in 25S rRNA is present in helix 65, a region that accounts for most of the intersubunit surface of the large subunit. The chain is 25S rRNA (adenine(2142)-N(1))-methyltransferase from Saccharomyces cerevisiae (strain ATCC 204508 / S288c) (Baker's yeast).